Consider the following 727-residue polypeptide: FACT complex subunit Ssrp1 (727 aa).

Disordered stretches follow at residues 458-565 (AEAR…AFML) and 596-727 (ELKD…EGSD). Acidic residues-rich tracts occupy residues 464-479 (EEED…ESTD) and 487-508 (NESD…DDSD). Over residues 510–519 (SGGGGDGGTD) the composition is skewed to gly residues. Composition is skewed to basic and acidic residues over residues 529–555 (KKNE…DTGK), 596–620 (ELKD…EMRN), and 675–703 (DQEK…KSES). The segment at residues 556–622 (PKRGTSAFML…RYQEEMRNYK (67 aa)) is a DNA-binding region (HMG box). Positions 704–727 (EGGDSDDASNASEDDDEEEDEGSD) are enriched in acidic residues.

It belongs to the SSRP1 family. Component of the FACT complex, a stable heterodimer of dre4/spt16 and Ssrp.

Its subcellular location is the nucleus. It localises to the chromosome. It is found in the nucleolus. In terms of biological role, component of the FACT complex, a general chromatin factor that acts to reorganize nucleosomes. The FACT complex is involved in multiple processes that require DNA as a template such as mRNA elongation, DNA replication and DNA repair. During transcription elongation the FACT complex acts as a histone chaperone that both destabilizes and restores nucleosomal structure. It facilitates the passage of RNA polymerase II and transcription by promoting the dissociation of one histone H2A-H2B dimer from the nucleosome, then subsequently promotes the reestablishment of the nucleosome following the passage of RNA polymerase II. Binds specifically to single-stranded DNA and RNA with highest affinity for nucleotides G and U. The FACT complex is required for expression of Hox genes. The chain is FACT complex subunit Ssrp1 (Ssrp) from Drosophila pseudoobscura pseudoobscura (Fruit fly).